Reading from the N-terminus, the 222-residue chain is Chalcone--flavanone isomerase 1 (222 aa).

Residues threonine 48, asparagine 113, and threonine 190 each coordinate substrate.

It belongs to the chalcone isomerase family.

It carries out the reaction a chalcone = a flavanone.. Its pathway is secondary metabolite biosynthesis; flavonoid biosynthesis. In terms of biological role, catalyzes the intramolecular cyclization of bicyclic chalcones into tricyclic (S)-flavanones. Responsible for the isomerization of 4,2',4',6'-tetrahydroxychalcone (also termed chalcone) into naringenin. The polypeptide is Chalcone--flavanone isomerase 1 (CHI1) (Medicago sativa (Alfalfa)).